Reading from the N-terminus, the 177-residue chain is 3-hydroxydecanoyl-[acyl-carrier-protein] dehydratase (177 aa).

Residue His-71 is part of the active site.

It belongs to the thioester dehydratase family. FabA subfamily. In terms of assembly, homodimer.

The protein resides in the cytoplasm. The enzyme catalyses a (3R)-hydroxyacyl-[ACP] = a (2E)-enoyl-[ACP] + H2O. It carries out the reaction (3R)-hydroxydecanoyl-[ACP] = (2E)-decenoyl-[ACP] + H2O. It catalyses the reaction (2E)-decenoyl-[ACP] = (3Z)-decenoyl-[ACP]. It functions in the pathway lipid metabolism; fatty acid biosynthesis. Functionally, necessary for the introduction of cis unsaturation into fatty acids. Catalyzes the dehydration of (3R)-3-hydroxydecanoyl-ACP to E-(2)-decenoyl-ACP and then its isomerization to Z-(3)-decenoyl-ACP. Can catalyze the dehydratase reaction for beta-hydroxyacyl-ACPs with saturated chain lengths up to 16:0, being most active on intermediate chain length. The chain is 3-hydroxydecanoyl-[acyl-carrier-protein] dehydratase from Wigglesworthia glossinidia brevipalpis.